Reading from the N-terminus, the 776-residue chain is Microtubule-associated protein tau (776 aa).

Positions Met1–Gln26 are enriched in basic and acidic residues. Disordered stretches follow at residues Met1–Gly263 and Ser276–Val591. The residue at position 2 (Ala2) is an N-acetylalanine. A phosphotyrosine mark is found at Tyr18 and Tyr29. A Glycyl lysine isopeptide (Lys-Gly) (interchain with G-Cter in ubiquitin) cross-link involves residue Lys44. Residues Ser46 and Ser61 each carry the phosphoserine modification. Polar residues predominate over residues Ser61 to Thr71. A phosphothreonine mark is found at Thr69, Thr71, and Thr111. Basic and acidic residues-rich tracts occupy residues Glu179 to Lys189 and Gly207 to Glu216. Ser214 is modified (phosphoserine). The span at Glu217–Ser228 shows a compositional bias: acidic residues. Basic and acidic residues predominate over residues Glu314–Gly323. The segment covering Arg324 to Pro340 has biased composition (low complexity). Basic and acidic residues-rich tracts occupy residues Glu344–Glu356 and Lys381–Ala393. Over residues Lys440 to Ser452 the composition is skewed to polar residues. Positions Lys455–Thr466 are enriched in basic and acidic residues. The residue at position 470 (Thr470) is a Phosphothreonine. Position 472 is an omega-N-methylarginine (Arg472). Lys480 bears the N6,N6-dimethyllysine; alternate mark. Lys480 is modified (N6-acetyllysine; alternate). A phosphothreonine mark is found at Thr486, Thr492, and Thr498. A phosphoserine mark is found at Ser502, Ser526, and Ser530. The span at Arg517–Asp528 shows a compositional bias: basic and acidic residues. Over residues Arg529–Ser549 the composition is skewed to low complexity. The residue at position 532 (Tyr532) is a Phosphotyrosine. Residues Ser533, Ser534, and Ser537 each carry the phosphoserine modification. A phosphothreonine mark is found at Thr540 and Thr547. Ser549 carries the phosphoserine modification. Thr552 carries the phosphothreonine modification. Position 560 is an N6-acetyllysine (Lys560). Thr566 is subject to Phosphothreonine. Residues Ser570 and Ser572 each carry the phosphoserine modification. Tau/MAP repeat units lie at residues Gln579 to Lys609, Val610 to Ser640, Val641 to Gln671, and Val672 to Asn703. Lys589 is covalently cross-linked (Glycyl lysine isopeptide (Lys-Gly) (interchain with G-Cter in ubiquitin)). Lys594 carries the N6-acetyllysine; alternate modification. Lys594 bears the N6-methyllysine; alternate mark. Lys594 is covalently cross-linked (Glycyl lysine isopeptide (Lys-Gly) (interchain with G-Cter in ubiquitin); alternate). A Phosphoserine modification is found at Ser597. A Glycyl lysine isopeptide (Lys-Gly) (interchain with G-Cter in ubiquitin) cross-link involves residue Lys602. Residue Lys616 is modified to N6-acetyllysine; alternate. Lys616 is covalently cross-linked (Glycyl lysine isopeptide (Lys-Gly) (interchain with G-Cter in ubiquitin); alternate). Phosphoserine occurs at positions 620 and 624. Lys625 is subject to N6-acetyllysine. At Ser628 the chain carries Phosphoserine. At Lys633 the chain carries N6-acetyllysine; alternate. Lys633 is covalently cross-linked (Glycyl lysine isopeptide (Lys-Gly) (interchain with G-Cter in ubiquitin); alternate). Ser640 carries the post-translational modification Phosphoserine. Position 646 is an N6,N6-dimethyllysine; alternate (Lys646). N6-acetyllysine; alternate occurs at positions 646, 652, and 656. Residues Lys646, Lys652, and Lys656 each participate in a glycyl lysine isopeptide (Lys-Gly) (interchain with G-Cter in ubiquitin); alternate cross-link. A Phosphoserine modification is found at Ser659. Lys666, Lys678, and Lys682 each carry N6-acetyllysine; alternate. Residues Lys666, Lys678, and Lys682 each participate in a glycyl lysine isopeptide (Lys-Gly) (interchain with G-Cter in ubiquitin); alternate cross-link. Arg684 carries the post-translational modification Omega-N-methylarginine. Position 687 is a phosphoserine (Ser687). Lys688 participates in a covalent cross-link: Glycyl lysine isopeptide (Lys-Gly) (interchain with G-Cter in ubiquitin). Position 691 is a phosphoserine (Ser691). Lys704 bears the N6-acetyllysine; alternate mark. A Glycyl lysine isopeptide (Lys-Gly) (interchain with G-Cter in ubiquitin); alternate cross-link involves residue Lys704. Residue Lys710 forms a Glycyl lysine isopeptide (Lys-Gly) (interchain with G-Cter in ubiquitin) linkage. The residue at position 720 (Lys720) is an N6-acetyllysine; alternate. Residue Lys720 forms a Glycyl lysine isopeptide (Lys-Gly) (interchain with G-Cter in ubiquitin); alternate linkage. At Tyr729 the chain carries Phosphotyrosine. Residues Ser731 and Ser735 each carry the phosphoserine modification. The tract at residues Val733 to Ile752 is disordered. Polar residues predominate over residues Gly736–Ser751. Phosphothreonine is present on Thr738. Phosphoserine occurs at positions 739, 744, 751, and 757. Thr762 is subject to Phosphothreonine.

In terms of assembly, interacts with MARK1, MARK2, MARK3 and MARK4. Interacts with SQSTM1 when polyubiquitinated. Interacts with PSMC2 through SQSTM1. Interacts with FKBP4. Binds to CSNK1D. Interacts with SGK1. Interacts with EPM2A; the interaction dephosphorylates MAPT at Ser-396. Interacts with PIN1. Interacts with LRRK2. Interacts with LRP1, leading to endocytosis; this interaction is reduced in the presence of LRPAP1/RAP. In terms of processing, polyubiquitinated. Requires functional TRAF6 and may provoke SQSTM1-dependent degradation by the proteasome. Phosphorylation at various serine and threonine residues in S-P or T-P motifs by proline-directed protein kinases (PDPK1, CDK1, CDK5, GSK3, MAPK) (a few sites per protein in interphase, more in mitosis), and at serine residues in K-X-G-S motifs by MAP/microtubule affinity-regulating kinase (MARK1, MARK2, MARK3 or MARK4), causing detachment from microtubules, and their disassembly. Phosphorylation at Ser-597 by BRSK1 and BRSK2 in neurons affects ability to bind microtubules and plays a role in neuron polarization. Phosphorylation at Ser-214 by SGK1 mediates microtubule depolymerization and neurite formation in hippocampal neurons. Phosphorylated by PHK. Dephosphorylation at several serine and threonine residues by the serine/threonine phosphatase PPP5C.

It localises to the cytoplasm. Its subcellular location is the cytosol. The protein resides in the cell membrane. The protein localises to the cytoskeleton. It is found in the cell projection. It localises to the axon. Its subcellular location is the dendrite. Functionally, promotes microtubule assembly and stability, and might be involved in the establishment and maintenance of neuronal polarity. The C-terminus binds axonal microtubules while the N-terminus binds neural plasma membrane components, suggesting that tau functions as a linker protein between both. Axonal polarity is predetermined by tau localization (in the neuronal cell) in the domain of the cell body defined by the centrosome. The short isoforms allow plasticity of the cytoskeleton whereas the longer isoforms may preferentially play a role in its stabilization. This Gorilla gorilla gorilla (Western lowland gorilla) protein is Microtubule-associated protein tau (MAPT).